We begin with the raw amino-acid sequence, 565 residues long: DNA mismatch repair protein MutL (565 aa).

The protein belongs to the DNA mismatch repair MutL/HexB family.

In terms of biological role, this protein is involved in the repair of mismatches in DNA. It is required for dam-dependent methyl-directed DNA mismatch repair. May act as a 'molecular matchmaker', a protein that promotes the formation of a stable complex between two or more DNA-binding proteins in an ATP-dependent manner without itself being part of a final effector complex. The protein is DNA mismatch repair protein MutL of Desulforudis audaxviator (strain MP104C).